Consider the following 363-residue polypeptide: Transcription factor PIF6 (363 aa).

Disordered stretches follow at residues 154–204 (SEGS…RNDI) and 340–363 (IPNPNSLSNLDGATLHKKSRKTNR). Over residues 178–188 (RTRKALVKRKR) the composition is skewed to basic residues. A bHLH domain is found at 188–237 (RNAEAYNSPERNQRNDINKKMRTLQNLLPNSHKDDNESMLDEAINYMTNL). Residues 340–350 (IPNPNSLSNLD) are compositionally biased toward polar residues. Residues 354–363 (LHKKSRKTNR) are compositionally biased toward basic residues.

Homodimer. Interacts with APRR1/TOC1. Binds to RGL2 and RGA. Associates to PTAC12/HMR/PAP5 which acts as a transcriptional coactivator. As to expression, mainly expressed in fruits and flowers and, to a lower extent, in leaves, stems, seedlings and roots.

The protein localises to the nucleus. Transcription factor. The chain is Transcription factor PIF6 from Arabidopsis thaliana (Mouse-ear cress).